The sequence spans 750 residues: Photosystem I P700 chlorophyll a apoprotein A1 (750 aa).

The next 8 membrane-spanning stretches (helical) occupy residues 70 to 93 (VFSA…FHGA), 156 to 179 (LYTT…FHYH), 195 to 219 (LNHH…HVSL), 291 to 309 (TAHH…GHMY), 346 to 369 (WHAQ…HHMY), 385 to 411 (LSLF…IFMV), 433 to 455 (AIIS…LYIH), and 531 to 549 (FLVH…LILL). [4Fe-4S] cluster contacts are provided by C573 and C582. Transmembrane regions (helical) follow at residues 589–610 (HVFL…HFSW) and 664–686 (LSAY…MFLF). Residue H675 coordinates chlorophyll a'. Chlorophyll a contacts are provided by M683 and Y691. W692 contacts phylloquinone. The helical transmembrane segment at 724–744 (AVGVAHYLLGGIATTWAFFLA) threads the bilayer.

This sequence belongs to the PsaA/PsaB family. The PsaA/B heterodimer binds the P700 chlorophyll special pair and subsequent electron acceptors. PSI consists of a core antenna complex that captures photons, and an electron transfer chain that converts photonic excitation into a charge separation. The eukaryotic PSI reaction center is composed of at least 11 subunits. The cofactor is P700 is a chlorophyll a/chlorophyll a' dimer, A0 is one or more chlorophyll a, A1 is one or both phylloquinones and FX is a shared 4Fe-4S iron-sulfur center..

It is found in the plastid. The protein localises to the chloroplast thylakoid membrane. It carries out the reaction reduced [plastocyanin] + hnu + oxidized [2Fe-2S]-[ferredoxin] = oxidized [plastocyanin] + reduced [2Fe-2S]-[ferredoxin]. In terms of biological role, psaA and PsaB bind P700, the primary electron donor of photosystem I (PSI), as well as the electron acceptors A0, A1 and FX. PSI is a plastocyanin-ferredoxin oxidoreductase, converting photonic excitation into a charge separation, which transfers an electron from the donor P700 chlorophyll pair to the spectroscopically characterized acceptors A0, A1, FX, FA and FB in turn. Oxidized P700 is reduced on the lumenal side of the thylakoid membrane by plastocyanin. The sequence is that of Photosystem I P700 chlorophyll a apoprotein A1 from Physcomitrium patens (Spreading-leaved earth moss).